The chain runs to 188 residues: Adenylate kinase (188 aa).

11–16 provides a ligand contact to ATP; the sequence is GAGKGT. The tract at residues 31–60 is NMP; sequence STGDIFRANIKDQTELGREAQRYTDAGNLV. Residues threonine 32, arginine 37, 58-60, 86-89, and glutamine 93 each bind AMP; these read NLV and GYPR. Positions 127–137 are LID; it reads GRAQEQGRTDD. Arginine 128 provides a ligand contact to ATP. Arginine 134 and arginine 145 together coordinate AMP. Glycine 173 contributes to the ATP binding site.

The protein belongs to the adenylate kinase family. In terms of assembly, monomer.

The protein localises to the cytoplasm. It carries out the reaction AMP + ATP = 2 ADP. It participates in purine metabolism; AMP biosynthesis via salvage pathway; AMP from ADP: step 1/1. Its function is as follows. Catalyzes the reversible transfer of the terminal phosphate group between ATP and AMP. Plays an important role in cellular energy homeostasis and in adenine nucleotide metabolism. The protein is Adenylate kinase of Kocuria rhizophila (strain ATCC 9341 / DSM 348 / NBRC 103217 / DC2201).